The chain runs to 282 residues: Bifunctional protein FolD (282 aa).

Residues 166-168 and Ser-191 contribute to the NADP(+) site; that span reads GRS.

Belongs to the tetrahydrofolate dehydrogenase/cyclohydrolase family. As to quaternary structure, homodimer.

The catalysed reaction is (6R)-5,10-methylene-5,6,7,8-tetrahydrofolate + NADP(+) = (6R)-5,10-methenyltetrahydrofolate + NADPH. The enzyme catalyses (6R)-5,10-methenyltetrahydrofolate + H2O = (6R)-10-formyltetrahydrofolate + H(+). Its pathway is one-carbon metabolism; tetrahydrofolate interconversion. In terms of biological role, catalyzes the oxidation of 5,10-methylenetetrahydrofolate to 5,10-methenyltetrahydrofolate and then the hydrolysis of 5,10-methenyltetrahydrofolate to 10-formyltetrahydrofolate. This Acidovorax ebreus (strain TPSY) (Diaphorobacter sp. (strain TPSY)) protein is Bifunctional protein FolD.